The primary structure comprises 126 residues: Large ribosomal subunit protein bL12 (126 aa).

Belongs to the bacterial ribosomal protein bL12 family. In terms of assembly, homodimer. Part of the ribosomal stalk of the 50S ribosomal subunit. Forms a multimeric L10(L12)X complex, where L10 forms an elongated spine to which 2 to 4 L12 dimers bind in a sequential fashion. Binds GTP-bound translation factors.

Forms part of the ribosomal stalk which helps the ribosome interact with GTP-bound translation factors. Is thus essential for accurate translation. The chain is Large ribosomal subunit protein bL12 from Methylocella silvestris (strain DSM 15510 / CIP 108128 / LMG 27833 / NCIMB 13906 / BL2).